We begin with the raw amino-acid sequence, 71 residues long: uncharacterized protein (71 aa).

Residues 23 to 71 are disordered; it reads ENEKAGQSEEYDDDDKEENKKRRRNNGRRGPPEKKKSRRGGEEQTQRII. Basic and acidic residues predominate over residues 52-71; the sequence is GPPEKKKSRRGGEEQTQRII.

This is an uncharacterized protein from Caenorhabditis elegans.